The sequence spans 305 residues: Ribonuclease BN (305 aa).

Positions 64, 66, 68, 69, 141, 212, and 270 each coordinate Zn(2+). Aspartate 68 acts as the Proton acceptor in catalysis.

The protein belongs to the RNase Z family. RNase BN subfamily. In terms of assembly, homodimer. It depends on Zn(2+) as a cofactor.

Its function is as follows. Zinc phosphodiesterase, which has both exoribonuclease and endoribonuclease activities. This Shigella flexneri protein is Ribonuclease BN.